The following is a 613-amino-acid chain: Pescadillo homolog (613 aa).

Residues 259-344 (KELSNELETK…MKQIEHDIIX (86 aa)) are a coiled coil. A disordered region spans residues 268-333 (KESTEDNIIE…KNDQKNDQKN (66 aa)). The segment covering 278-333 (ENEKKTKNGKTENCEKNDQENEKKTKNDKTKNCEKNDQKNDQKNDQKNDQKNDQKN) has biased composition (basic and acidic residues). The BRCT domain maps to 350–453 (SVKNLFKNHI…MILSCEDYNI (104 aa)). Residues 485 to 517 (LSEDPQYNKSIQKNKTNSENKXNNYNDNENDMS) are disordered. Residues 492-601 (NKSIQKNKTN…ENRQKLTIEK (110 aa)) are a coiled coil. Low complexity predominate over residues 497-511 (KNKTNSENKXNNYND).

Belongs to the pescadillo family.

The protein resides in the nucleus. It localises to the nucleolus. It is found in the nucleoplasm. In terms of biological role, required for maturation of ribosomal RNAs and formation of the large ribosomal subunit. The polypeptide is Pescadillo homolog (Plasmodium yoelii yoelii).